The following is a 368-amino-acid chain: Zinc finger protein 24 (368 aa).

Lysine 22 participates in a covalent cross-link: Glycyl lysine isopeptide (Lys-Gly) (interchain with G-Cter in SUMO2). Residue lysine 27 forms a Glycyl lysine isopeptide (Lys-Gly) (interchain with G-Cter in SUMO1); alternate linkage. Residue lysine 27 forms a Glycyl lysine isopeptide (Lys-Gly) (interchain with G-Cter in SUMO2); alternate linkage. Residues arginine 52 to leucine 134 form the SCAN box domain. Phosphoserine is present on residues serine 132 and serine 142. Glycyl lysine isopeptide (Lys-Gly) (interchain with G-Cter in SUMO2) cross-links involve residues lysine 147, lysine 177, and lysine 236. Residues histidine 251–histidine 273 form a C2H2-type 1 zinc finger. The necessary and sufficient for nuclear localization stretch occupies residues histidine 251–histidine 301. Serine 274 is subject to Phosphoserine. Residues lysine 277 and lysine 286 each participate in a glycyl lysine isopeptide (Lys-Gly) (interchain with G-Cter in SUMO2) cross-link. 3 consecutive C2H2-type zinc fingers follow at residues tyrosine 279–histidine 301, tyrosine 307–histidine 329, and tyrosine 335–histidine 357. Serine 292 is subject to Phosphoserine. Residue tyrosine 335 is modified to Phosphotyrosine. Residues lysine 361 and lysine 367 each participate in a glycyl lysine isopeptide (Lys-Gly) (interchain with G-Cter in SUMO2) cross-link.

The protein belongs to the krueppel C2H2-type zinc-finger protein family. In terms of processing, sumoylated.

The protein resides in the nucleus. In terms of biological role, transcription factor required for myelination of differentiated oligodendrocytes. Required for the conversion of oligodendrocytes from the premyelinating to the myelinating state. In the developing central nervous system (CNS), involved in the maintenance in the progenitor stage by promoting the cell cycle. Specifically binds to the 5'-TCAT-3' DNA sequence. Has transcription repressor activity in vitro. This Pan paniscus (Pygmy chimpanzee) protein is Zinc finger protein 24 (ZNF24).